A 277-amino-acid polypeptide reads, in one-letter code: Large ribosomal subunit protein uL2 (277 aa).

The segment at 222–277 (GVTMNPVDHPHGGGEGRTSGGRHPVTPWGKPTKGKKTRSNKSTNKFILISRHKRKK) is disordered.

It belongs to the universal ribosomal protein uL2 family. As to quaternary structure, part of the 50S ribosomal subunit. Forms a bridge to the 30S subunit in the 70S ribosome.

One of the primary rRNA binding proteins. Required for association of the 30S and 50S subunits to form the 70S ribosome, for tRNA binding and peptide bond formation. It has been suggested to have peptidyltransferase activity; this is somewhat controversial. Makes several contacts with the 16S rRNA in the 70S ribosome. In Rhodopseudomonas palustris (strain BisB18), this protein is Large ribosomal subunit protein uL2.